A 316-amino-acid chain; its full sequence is Methionyl-tRNA formyltransferase (316 aa).

112–115 contacts (6S)-5,6,7,8-tetrahydrofolate; sequence SLLP.

The protein belongs to the Fmt family.

It carries out the reaction L-methionyl-tRNA(fMet) + (6R)-10-formyltetrahydrofolate = N-formyl-L-methionyl-tRNA(fMet) + (6S)-5,6,7,8-tetrahydrofolate + H(+). Its function is as follows. Attaches a formyl group to the free amino group of methionyl-tRNA(fMet). The formyl group appears to play a dual role in the initiator identity of N-formylmethionyl-tRNA by promoting its recognition by IF2 and preventing the misappropriation of this tRNA by the elongation apparatus. In Psychromonas ingrahamii (strain DSM 17664 / CCUG 51855 / 37), this protein is Methionyl-tRNA formyltransferase.